The chain runs to 197 residues: Large ribosomal subunit protein uL11 (197 aa).

Belongs to the universal ribosomal protein uL11 family. In terms of assembly, part of the ribosomal stalk of the 50S ribosomal subunit. Interacts with L10 and the large rRNA to form the base of the stalk. L10 forms an elongated spine to which L12 dimers bind in a sequential fashion forming a multimeric L10(L12)X complex. One or more lysine residues are methylated.

In terms of biological role, forms part of the ribosomal stalk which helps the ribosome interact with GTP-bound translation factors. In Mycoplasma mobile (strain ATCC 43663 / 163K / NCTC 11711) (Mesomycoplasma mobile), this protein is Large ribosomal subunit protein uL11.